The sequence spans 722 residues: PAB1-binding protein 1 (722 aa).

Positions 1 to 10 (MKGNFRKRDS) are enriched in basic and acidic residues. Residues 1–38 (MKGNFRKRDSSTNSRKGGNSDSNYTNGGVPNQNNSSMF) form a disordered region. Residues 11-38 (STNSRKGGNSDSNYTNGGVPNQNNSSMF) are compositionally biased toward polar residues. The region spanning 51–107 (RQDYLLANSIGSDVTVTVTSGVKYTGLLVSCNLESTNGIDVVLRFPRVADSGVSDSV) is the Sm domain. Ser-106 is subject to Phosphoserine. A Phosphothreonine modification is found at Thr-193. Ser-215 carries the phosphoserine modification. Disordered regions lie at residues 305 to 380 (ALKS…LSSK), 412 to 488 (SSTL…NPHT), and 683 to 722 (GSGP…SGHK). 4 stretches are compositionally biased toward low complexity: residues 307–316 (KSNSKPNSNK), 338–347 (SSSNSNKNEN), 356–370 (PAAA…PQKT), and 412–421 (SSTLKSNSSL). Lys-344 participates in a covalent cross-link: Glycyl lysine isopeptide (Lys-Gly) (interchain with G-Cter in ubiquitin). Positions 429-455 (TPSAKTVSPTTQISAGKSESRRSGSNI) are enriched in polar residues. A Phosphoserine modification is found at Ser-436. Over residues 456–471 (SQGQSSTGHTTRSSTS) the composition is skewed to low complexity. The span at 698-722 (SHGHSRNYHQTSHHGHHNSSTSGHK) shows a compositional bias: basic residues.

This sequence belongs to the ataxin-2 family. Interacts (via C-terminus) with MKT1 (via C-terminus). Interacts with FIR1, IGO1, LSM12, PBP4 and PAB1.

The protein resides in the cytoplasm. It localises to the nucleus. It is found in the mitochondrion. Functionally, involved in pre-mRNA polyadenylation. May act to repress the ability of PAB1 to negatively regulate polyadenylation. Negative regulator of poly(A) nuclease (PAN) activity. Promotes mating-type switching in mother cells by positively regulating HO mRNA translation. Localizes MKT1 to polysomes. The chain is PAB1-binding protein 1 (PBP1) from Saccharomyces cerevisiae (strain ATCC 204508 / S288c) (Baker's yeast).